Reading from the N-terminus, the 253-residue chain is DNA repair protein RecO (253 aa).

The protein belongs to the RecO family.

Involved in DNA repair and RecF pathway recombination. The polypeptide is DNA repair protein RecO (Symbiobacterium thermophilum (strain DSM 24528 / JCM 14929 / IAM 14863 / T)).